Consider the following 131-residue polypeptide: Large ribosomal subunit protein bL17 (131 aa).

It belongs to the bacterial ribosomal protein bL17 family. As to quaternary structure, part of the 50S ribosomal subunit. Contacts protein L32.

This Janthinobacterium sp. (strain Marseille) (Minibacterium massiliensis) protein is Large ribosomal subunit protein bL17.